The primary structure comprises 504 residues: Cytochrome P450 6B2 (504 aa).

Heme is bound at residue C445.

The protein belongs to the cytochrome P450 family. It depends on heme as a cofactor.

The protein resides in the endoplasmic reticulum membrane. It localises to the microsome membrane. It catalyses the reaction an organic molecule + reduced [NADPH--hemoprotein reductase] + O2 = an alcohol + oxidized [NADPH--hemoprotein reductase] + H2O + H(+). The polypeptide is Cytochrome P450 6B2 (CYP6B2) (Helicoverpa armigera (Cotton bollworm)).